The sequence spans 78 residues: Acyl carrier protein (78 aa).

Residues 2 to 77 form the Carrier domain; the sequence is SDIAERVKKI…DAVKFIEKAQ (76 aa). At Ser-37 the chain carries O-(pantetheine 4'-phosphoryl)serine.

This sequence belongs to the acyl carrier protein (ACP) family. In terms of processing, 4'-phosphopantetheine is transferred from CoA to a specific serine of apo-ACP by AcpS. This modification is essential for activity because fatty acids are bound in thioester linkage to the sulfhydryl of the prosthetic group.

It is found in the cytoplasm. Its pathway is lipid metabolism; fatty acid biosynthesis. In terms of biological role, carrier of the growing fatty acid chain in fatty acid biosynthesis. The protein is Acyl carrier protein of Sinorhizobium fredii (strain NBRC 101917 / NGR234).